The sequence spans 722 residues: Ribosomal RNA large subunit methyltransferase K/L (722 aa).

A THUMP domain is found at 55–167 (TGYRACLWSR…GNEGTLYLDL (113 aa)).

It belongs to the methyltransferase superfamily. RlmKL family.

The protein resides in the cytoplasm. It carries out the reaction guanosine(2445) in 23S rRNA + S-adenosyl-L-methionine = N(2)-methylguanosine(2445) in 23S rRNA + S-adenosyl-L-homocysteine + H(+). The catalysed reaction is guanosine(2069) in 23S rRNA + S-adenosyl-L-methionine = N(2)-methylguanosine(2069) in 23S rRNA + S-adenosyl-L-homocysteine + H(+). Specifically methylates the guanine in position 2445 (m2G2445) and the guanine in position 2069 (m7G2069) of 23S rRNA. This is Ribosomal RNA large subunit methyltransferase K/L from Desulfotalea psychrophila (strain LSv54 / DSM 12343).